We begin with the raw amino-acid sequence, 586 residues long: Arginine--tRNA ligase (586 aa).

The 'HIGH' region motif lies at 128-138; sequence ANPTGPLHVGH.

The protein belongs to the class-I aminoacyl-tRNA synthetase family. Monomer.

Its subcellular location is the cytoplasm. The catalysed reaction is tRNA(Arg) + L-arginine + ATP = L-arginyl-tRNA(Arg) + AMP + diphosphate. The chain is Arginine--tRNA ligase from Legionella pneumophila (strain Corby).